We begin with the raw amino-acid sequence, 452 residues long: Protein FAM81B (452 aa).

2 stretches are compositionally biased toward polar residues: residues 1 to 11 (MQLQFLGTLAS) and 38 to 55 (IMSS…TATA). Residues 1 to 85 (MQLQFLGTLA…KVRLSPAKMS (85 aa)) form a disordered region. Coiled coils occupy residues 164 to 192 (IQTI…DQAA) and 329 to 452 (LGHI…LQEV).

It belongs to the FAM81 family.

In Homo sapiens (Human), this protein is Protein FAM81B (FAM81B).